Here is a 280-residue protein sequence, read N- to C-terminus: Large ribosomal subunit protein uL2 (280 aa).

Disordered regions lie at residues 1-58 (MAIR…GGGH) and 226-280 (MNPV…KHGR). Composition is skewed to basic residues over residues 37-58 (LHGH…GGGH) and 268-280 (IVRR…KHGR).

The protein belongs to the universal ribosomal protein uL2 family. In terms of assembly, part of the 50S ribosomal subunit. Forms a bridge to the 30S subunit in the 70S ribosome.

One of the primary rRNA binding proteins. Required for association of the 30S and 50S subunits to form the 70S ribosome, for tRNA binding and peptide bond formation. It has been suggested to have peptidyltransferase activity; this is somewhat controversial. Makes several contacts with the 16S rRNA in the 70S ribosome. This Mycobacterium avium (strain 104) protein is Large ribosomal subunit protein uL2.